The sequence spans 426 residues: Enolase (426 aa).

Residue Gln-163 coordinates (2R)-2-phosphoglycerate. Glu-205 serves as the catalytic Proton donor. 3 residues coordinate Mg(2+): Asp-242, Glu-283, and Asp-310. (2R)-2-phosphoglycerate is bound by residues Lys-335, Arg-364, Ser-365, and Lys-386. The active-site Proton acceptor is Lys-335.

This sequence belongs to the enolase family. It depends on Mg(2+) as a cofactor.

It localises to the cytoplasm. Its subcellular location is the secreted. The protein localises to the cell surface. It catalyses the reaction (2R)-2-phosphoglycerate = phosphoenolpyruvate + H2O. The protein operates within carbohydrate degradation; glycolysis; pyruvate from D-glyceraldehyde 3-phosphate: step 4/5. In terms of biological role, catalyzes the reversible conversion of 2-phosphoglycerate (2-PG) into phosphoenolpyruvate (PEP). It is essential for the degradation of carbohydrates via glycolysis. The protein is Enolase of Arthrobacter sp. (strain FB24).